Consider the following 100-residue polypeptide: A-type ATP synthase subunit F (100 aa).

This sequence belongs to the V-ATPase F subunit family. As to quaternary structure, has multiple subunits with at least A(3), B(3), C, D, E, F, H, I and proteolipid K(x).

It localises to the cell membrane. Component of the A-type ATP synthase that produces ATP from ADP in the presence of a proton gradient across the membrane. This chain is A-type ATP synthase subunit F, found in Methanoregula boonei (strain DSM 21154 / JCM 14090 / 6A8).